The primary structure comprises 434 residues: BEN domain-containing protein 7 (434 aa).

Residues Lys-16, Lys-56, and Lys-85 each participate in a glycyl lysine isopeptide (Lys-Gly) (interchain with G-Cter in SUMO2) cross-link. Disordered stretches follow at residues 96–151 (PQRS…SNGE) and 212–262 (SRKR…ERTS). Residues 97-150 (QRSNSSTEASQGLHSNSRGAWNELPTQSGQFSGQSGPRSRTFQTQPHISASSNG) show a composition bias toward polar residues. Residues 212-222 (SRKRNKKKKVL) are compositionally biased toward basic residues. A Glycyl lysine isopeptide (Lys-Gly) (interchain with G-Cter in SUMO2) cross-link involves residue Lys-244. The region spanning 289–399 (GFDVFMPKSQ…RRLKRGSAEV (111 aa)) is the BEN domain. Thr-326 is subject to Phosphothreonine. Ser-330 carries the post-translational modification Phosphoserine. A disordered region spans residues 414-434 (TGHTFVIKRETPEDPEPGSVA).

This Mus musculus (Mouse) protein is BEN domain-containing protein 7 (Bend7).